Here is a 386-residue protein sequence, read N- to C-terminus: Innexin inx4 (386 aa).

At 1–21 the chain is on the cytoplasmic side; sequence MLEFVRPLQSILQIKQVNSTD. Residues 22-42 traverse the membrane as a helical segment; sequence LVWRLHCRVTVFLLLLASLLL. Residues 43-111 lie on the Extracellular side of the membrane; that stretch reads SARQYFGNPI…ESERSYQKYY (69 aa). A helical membrane pass occupies residues 112–132; it reads QWVVFILALQACMFSVPNFLW. Residues 133–187 are Cytoplasmic-facing; the sequence is KAWEAGRLQSLCDGLTTPIVPDHWEKTRKKQLITYLSADFPRLHRTYLLRYCFCT. Residues 188-208 traverse the membrane as a helical segment; the sequence is LLNFCNVLLNIFLVNVIFSGF. At 209–272 the chain is on the extracellular side; it reads WSNYHPAVKA…LNVVNEKIFA (64 aa). Residues 273 to 293 traverse the membrane as a helical segment; that stretch reads FIWLWFLGLLVISMLNLLFWI. The Cytoplasmic segment spans residues 294–386; that stretch reads VVLCSKGFRL…DPEGYDEEGV (93 aa). The disordered stretch occupies residues 358-386; it reads HNGHKTFRMPKGGEPDFYTDPEGYDEEGV. The segment covering 374–386 has biased composition (acidic residues); the sequence is FYTDPEGYDEEGV.

Belongs to the pannexin family.

It localises to the cell membrane. Its subcellular location is the cell junction. The protein localises to the gap junction. Its function is as follows. Structural component of gap junctions. Required for normal development of ovary. Required for normal egg production after blood meal. Required for normal development of testis. (Microbial infection) Modulates the development of Plasmodium falciparum oocysts. This chain is Innexin inx4, found in Anopheles gambiae (African malaria mosquito).